A 1021-amino-acid chain; its full sequence is Replication factor C subunit 1 (1021 aa).

Disordered stretches follow at residues 1–259 (MSSD…EGAP) and 339–392 (PAKA…GSAS). Residues 90-110 (KVSDELEDDMKPLPAKEVHKE) are compositionally biased toward basic and acidic residues. Residues 123–138 (SKRKTPVKPPPSKKLK) show a composition bias toward basic residues. The span at 197–207 (LDDDGEEDKMD) shows a compositional bias: acidic residues. Over residues 219–236 (RGRGGASGGRGRGGGGRG) the composition is skewed to gly residues. Composition is skewed to basic and acidic residues over residues 241–255 (GERK…KEVP) and 347–357 (HQSDKNSEKQQ). The region spanning 257–347 (GAPDCLTGLT…KPAKATVAKH (91 aa)) is the BRCT domain. The segment covering 374–392 (NQITTGKNISPKSNKGSAS) has biased composition (polar residues). 465–472 (SGPPGIGK) is an ATP binding site. The interval 931–1021 (VGESLPEENG…AGGSGGKRKR (91 aa)) is disordered. The span at 945 to 958 (EGDEEDSSDAENND) shows a compositional bias: acidic residues. Basic and acidic residues predominate over residues 965–977 (TKPKLDLQSDKKK). Residues 999–1010 (AGRSKASGSAGK) show a composition bias toward low complexity. The segment covering 1011–1021 (AAGGSGGKRKR) has biased composition (gly residues).

It belongs to the activator 1 large subunit family. Heterotetramer of subunits RFC2, RFC3, RFC4 and RFC5 that can form a complex with RFC1. Expressed in roots, leaves, shoot apical meristem (SAM), flag leaves and panicles.

It is found in the nucleus. In terms of biological role, may be involved in DNA replication and thus regulate cell proliferation. In Oryza sativa subsp. japonica (Rice), this protein is Replication factor C subunit 1 (RFC1).